A 545-amino-acid chain; its full sequence is T-complex protein 1 subunit alpha (545 aa).

The protein belongs to the TCP-1 chaperonin family. Heterooligomeric complex of about 850 to 900 kDa that forms two stacked rings, 12 to 16 nm in diameter.

It localises to the cytoplasm. Functionally, molecular chaperone; assists the folding of proteins upon ATP hydrolysis. Known to play a role, in vitro, in the folding of actin and tubulin. The chain is T-complex protein 1 subunit alpha (TCP-1A) from Schistosoma mansoni (Blood fluke).